A 487-amino-acid chain; its full sequence is Beta-barrel assembly-enhancing protease (487 aa).

The signal sequence occupies residues 1–27; that stretch reads MFRQLKKNLVATLIAAMTIGQVAPAFA. His-136 is a Zn(2+) binding site. Residue Glu-137 is part of the active site. Zn(2+) contacts are provided by His-140 and Glu-201. Asp-205 serves as the catalytic Proton donor. 4 TPR repeats span residues 309–342, 344–376, 377–409, and 427–460; these read RAAQ…EPGN, WYLD…RTNP, VLQL…NKDD, and DQEL…VKLG.

The protein belongs to the peptidase M48 family. BepA subfamily. Interacts with BamA and LoiP. It depends on Zn(2+) as a cofactor.

It is found in the periplasm. Protease activity is inhibited by the metal chelating reagents 1,10-phenanthroline and EDTA. Functionally, functions both as a chaperone and a metalloprotease. Maintains the integrity of the outer membrane by promoting either the assembly or the elimination of outer membrane proteins, depending on their folding state. Promotes disulfide rearrangement of LptD during its biogenesis, and proteolytic degradation of LptD and BamA when their proper assembly is compromised. May facilitate membrane attachment of LoiP under unfavorable conditions. The sequence is that of Beta-barrel assembly-enhancing protease from Escherichia coli (strain K12).